Consider the following 356-residue polypeptide: Heat-inducible transcription repressor HrcA (356 aa).

This sequence belongs to the HrcA family.

Functionally, negative regulator of class I heat shock genes (grpE-dnaK-dnaJ and groELS operons). Prevents heat-shock induction of these operons. This chain is Heat-inducible transcription repressor HrcA, found in Bartonella henselae (strain ATCC 49882 / DSM 28221 / CCUG 30454 / Houston 1) (Rochalimaea henselae).